Reading from the N-terminus, the 118-residue chain is Late cornified envelope protein 1C (118 aa).

Over residues 1–10 the composition is skewed to low complexity; sequence MSCQQSQQQC. 2 disordered regions span residues 1-23 and 87-118; these read MSCQ…CPPK and CHRP…GGCC. Over residues 11-23 the composition is skewed to pro residues; that stretch reads QPPPKCTPKCPPK. Residues 90-103 show a composition bias toward low complexity; sequence PQSSGCCSQPSGGS. Over residues 104-118 the composition is skewed to gly residues; the sequence is SCCGGGSGQHSGGCC.

It belongs to the LCE family. In terms of assembly, interacts with CYSRT1. As to expression, skin-specific. Expression was readily detected in adult trunk skin, adult arm skin, fetal skin, penal skin, vulva, esophagus and tongue. Not expressed in the cervix, rectum, lung, colon, or placenta.

In terms of biological role, precursors of the cornified envelope of the stratum corneum. The polypeptide is Late cornified envelope protein 1C (LCE1C) (Homo sapiens (Human)).